The primary structure comprises 191 residues: dCTP deaminase (191 aa).

Residues 112–117 (KSTYAR), 136–138 (TLE), Q157, Y173, and Q183 each bind dCTP. The Proton donor/acceptor role is filled by E138.

This sequence belongs to the dCTP deaminase family. Homotrimer.

It catalyses the reaction dCTP + H2O + H(+) = dUTP + NH4(+). Its pathway is pyrimidine metabolism; dUMP biosynthesis; dUMP from dCTP (dUTP route): step 1/2. In terms of biological role, catalyzes the deamination of dCTP to dUTP. The sequence is that of dCTP deaminase from Psychrobacter sp. (strain PRwf-1).